We begin with the raw amino-acid sequence, 47 residues long: Boigatoxin-A (47 aa).

Residue Gln1 is modified to Pyrrolidone carboxylic acid. Disulfide bonds link Cys10-Cys34 and Cys13-Cys21.

As to quaternary structure, monomer. In terms of tissue distribution, expressed by the venom gland.

It localises to the secreted. Functionally, this toxin may inhibit nicotinic acetylcholine receptor (nAChR). It has poorly reversible postsynaptic blocking activity in a chick muscle preparation and readily reversible inhibitory activity at a presynaptic site in the rat vas deferens prostatic segment most likely to prevent the release of neurotransmitters. This Boiga dendrophila (Mangrove snake) protein is Boigatoxin-A.